The chain runs to 342 residues: MGRTMLVLINTIQEQASEAIKQATDIVALEQIRVDFLGKKGKLTELLKGLANLSAEEKPKVGQLVNQAKQGISALIETKMIELKEKQLLAKLAAEQIDVTLPGRNHSTGSLHPVTQVKHRINDYFSRLGFDIVEGPEIETEFYNFEALNIPGHHPARAMHDTFYFGDGRLLRTHTSPVQIRTMEQRKPPFRLIAPGRVYRCDSDVTHTPMFHQVEGLLIDKQATLAGLKGLLQDFFAYFFGRELALRFRPSYFPFTEPSAEVDIECTQCNGKGCRSCKFTGWLEVLGCGMVHPNVLIAVNIDPNEYHGWAFGMGMDRLAMLYYGIDDLRMLFENDLTFLRQF.

Glutamate 257 lines the Mg(2+) pocket.

This sequence belongs to the class-II aminoacyl-tRNA synthetase family. Phe-tRNA synthetase alpha subunit type 1 subfamily. As to quaternary structure, tetramer of two alpha and two beta subunits. Mg(2+) serves as cofactor.

The protein resides in the cytoplasm. The enzyme catalyses tRNA(Phe) + L-phenylalanine + ATP = L-phenylalanyl-tRNA(Phe) + AMP + diphosphate + H(+). The protein is Phenylalanine--tRNA ligase alpha subunit of Legionella pneumophila subsp. pneumophila (strain Philadelphia 1 / ATCC 33152 / DSM 7513).